A 472-amino-acid polypeptide reads, in one-letter code: Pyridine nucleotide-disulfide oxidoreductase domain-containing protein 1 (472 aa).

This sequence belongs to the class-I pyridine nucleotide-disulfide oxidoreductase family. PYROXD1 subfamily. It depends on FAD as a cofactor.

Probable oxidoreductase. The sequence is that of Pyridine nucleotide-disulfide oxidoreductase domain-containing protein 1 from Drosophila melanogaster (Fruit fly).